Here is a 25-residue protein sequence, read N- to C-terminus: Large ribosomal subunit protein uL29 (25 aa).

The protein belongs to the universal ribosomal protein uL29 family.

This chain is Large ribosomal subunit protein uL29 (rpmC), found in Brevundimonas vesicularis (Pseudomonas vesicularis).